Reading from the N-terminus, the 293-residue chain is 4-diphosphocytidyl-2-C-methyl-D-erythritol kinase (293 aa).

Lys16 is a catalytic residue. Pro99–Ser109 contacts ATP. Residue Asp141 is part of the active site.

Belongs to the GHMP kinase family. IspE subfamily.

The enzyme catalyses 4-CDP-2-C-methyl-D-erythritol + ATP = 4-CDP-2-C-methyl-D-erythritol 2-phosphate + ADP + H(+). It functions in the pathway isoprenoid biosynthesis; isopentenyl diphosphate biosynthesis via DXP pathway; isopentenyl diphosphate from 1-deoxy-D-xylulose 5-phosphate: step 3/6. Functionally, catalyzes the phosphorylation of the position 2 hydroxy group of 4-diphosphocytidyl-2C-methyl-D-erythritol. This chain is 4-diphosphocytidyl-2-C-methyl-D-erythritol kinase, found in Burkholderia ambifaria (strain MC40-6).